A 95-amino-acid polypeptide reads, in one-letter code: Co-chaperonin GroES (95 aa).

The protein belongs to the GroES chaperonin family. As to quaternary structure, heptamer of 7 subunits arranged in a ring. Interacts with the chaperonin GroEL.

It localises to the cytoplasm. Functionally, together with the chaperonin GroEL, plays an essential role in assisting protein folding. The GroEL-GroES system forms a nano-cage that allows encapsulation of the non-native substrate proteins and provides a physical environment optimized to promote and accelerate protein folding. GroES binds to the apical surface of the GroEL ring, thereby capping the opening of the GroEL channel. This Bordetella avium (strain 197N) protein is Co-chaperonin GroES.